Reading from the N-terminus, the 367-residue chain is tRNA-specific 2-thiouridylase MnmA (367 aa).

Residues 7–14 (AMSGGVDS) and Met33 contribute to the ATP site. Cys108 acts as the Nucleophile in catalysis. Cys108 and Cys200 are oxidised to a cystine. Gly132 serves as a coordination point for ATP. Residues 150–152 (KDQ) form an interaction with tRNA region. Cys200 (cysteine persulfide intermediate) is an active-site residue. Positions 301-302 (RY) are interaction with tRNA.

It belongs to the MnmA/TRMU family.

The protein resides in the cytoplasm. It catalyses the reaction S-sulfanyl-L-cysteinyl-[protein] + uridine(34) in tRNA + AH2 + ATP = 2-thiouridine(34) in tRNA + L-cysteinyl-[protein] + A + AMP + diphosphate + H(+). Its function is as follows. Catalyzes the 2-thiolation of uridine at the wobble position (U34) of tRNA, leading to the formation of s(2)U34. The polypeptide is tRNA-specific 2-thiouridylase MnmA (Thermus thermophilus (strain ATCC BAA-163 / DSM 7039 / HB27)).